The chain runs to 508 residues: Cobyric acid synthase (508 aa).

Residues 249-451 enclose the GATase cobBQ-type domain; that stretch reads EVDVAIINLP…IHGIFENSLF (203 aa). The active-site Nucleophile is Cys-330. His-443 is a catalytic residue.

Belongs to the CobB/CobQ family. CobQ subfamily.

It functions in the pathway cofactor biosynthesis; adenosylcobalamin biosynthesis. Functionally, catalyzes amidations at positions B, D, E, and G on adenosylcobyrinic A,C-diamide. NH(2) groups are provided by glutamine, and one molecule of ATP is hydrogenolyzed for each amidation. The polypeptide is Cobyric acid synthase (Caldanaerobacter subterraneus subsp. tengcongensis (strain DSM 15242 / JCM 11007 / NBRC 100824 / MB4) (Thermoanaerobacter tengcongensis)).